A 255-amino-acid polypeptide reads, in one-letter code: Very-long-chain (3R)-3-hydroxyacyl-CoA dehydratase 2 (255 aa).

Over 3–42 the chain is Cytoplasmic; it reads AAAAATAAAKGNGGGGGRAGAGDASGTRKKKGPGPLATAY. The disordered stretch occupies residues 11–34; that stretch reads AKGNGGGGGRAGAGDASGTRKKKG. Positions 13–22 are enriched in gly residues; that stretch reads GNGGGGGRAG. The chain crosses the membrane as a helical span at residues 43-61; the sequence is LVIYNVVMTAGWLVIAVGL. The Lumenal portion of the chain corresponds to 62–80; the sequence is VRAYLAKGSYHSLYYSIEK. A helical membrane pass occupies residues 81 to 98; the sequence is PLKFFQTGALLEILHCAI. Over 99–108 the chain is Cytoplasmic; it reads GIVPSSVVLT. The helical transmembrane segment at 109–126 threads the bilayer; sequence SFQVMSRVFLIWAVTHSV. Residues 127-131 lie on the Lumenal side of the membrane; the sequence is KEVQS. The helical transmembrane segment at 132–147 threads the bilayer; that stretch reads EDSVLLFVIAWTITEI. Residues 148-170 lie on the Cytoplasmic side of the membrane; the sequence is IRYSFYTFSLLNHLPYLIKWARY. Residues 171 to 188 traverse the membrane as a helical segment; that stretch reads TLFIVLYPMGVSGELLTI. Catalysis depends on residues Tyr177 and Glu184. The Lumenal segment spans residues 189–218; the sequence is YAALPFVRQAGLYSISLPNKYNFSFDYYAF. Residues 199–215 are may be involved in interaction with TECR; it reads GLYSISLPNKYNFSFDY. N-linked (GlcNAc...) asparagine glycosylation occurs at Asn210. Residues 219 to 236 form a helical membrane-spanning segment; it reads LILIMISYIPIFPQLYFH. Over 237-255 the chain is Cytoplasmic; it reads MIHQRRKILSHTEEHKKFE.

It belongs to the very long-chain fatty acids dehydratase HACD family. May interact with enzymes of the ELO family (including ELOVL1); with those enzymes that mediate condensation, the first of the four steps of the reaction cycle responsible for fatty acids elongation, may be part of a larger fatty acids elongase complex. Interacts with BCAP31. Interacts (via the third lumenal loop) with TECR.

It is found in the endoplasmic reticulum membrane. The enzyme catalyses a very-long-chain (3R)-3-hydroxyacyl-CoA = a very-long-chain (2E)-enoyl-CoA + H2O. It carries out the reaction (3R)-hydroxyhexadecanoyl-CoA = (2E)-hexadecenoyl-CoA + H2O. It catalyses the reaction (3R)-hydroxyoctadecanoyl-CoA = (2E)-octadecenoyl-CoA + H2O. The catalysed reaction is (3R)-hydroxyeicosanoyl-CoA = (2E)-eicosenoyl-CoA + H2O. The enzyme catalyses (3R)-hydroxydocosanoyl-CoA = (2E)-docosenoyl-CoA + H2O. It carries out the reaction (3R)-hydroxytetracosanoyl-CoA = (2E)-tetracosenoyl-CoA + H2O. It catalyses the reaction (3R)-hydroxyhexacosanoyl-CoA = (2E)-hexacosenoyl-CoA + H2O. It participates in lipid metabolism; fatty acid biosynthesis. In terms of biological role, catalyzes the third of the very long-chain fatty acids (VLCFA) elongation four-step cycle (condensation, reduction, dehydration, and reduction). This endoplasmic reticulum-elongation process is characterized by the addition of two carbons to the lipid chain through each cycle. This enzyme catalyzes the dehydration of the 3-hydroxyacyl-CoA intermediate into trans-2,3-enoyl-CoA, within each cycle of elongation. Therefore, it participates in the production of various VLCFAs involved in multiple biological processes as precursors of membrane lipids and lipid mediators. This chain is Very-long-chain (3R)-3-hydroxyacyl-CoA dehydratase 2, found in Pongo abelii (Sumatran orangutan).